A 125-amino-acid chain; its full sequence is Small ribosomal subunit protein uS13 (125 aa).

The segment at 99 to 125 (RGQRTKTNARTRKGKRKTVANKKMAAK) is disordered.

This sequence belongs to the universal ribosomal protein uS13 family. As to quaternary structure, part of the 30S ribosomal subunit. Forms a loose heterodimer with protein S19. Forms two bridges to the 50S subunit in the 70S ribosome.

Functionally, located at the top of the head of the 30S subunit, it contacts several helices of the 16S rRNA. In the 70S ribosome it contacts the 23S rRNA (bridge B1a) and protein L5 of the 50S subunit (bridge B1b), connecting the 2 subunits; these bridges are implicated in subunit movement. Contacts the tRNAs in the A and P-sites. The protein is Small ribosomal subunit protein uS13 of Borrelia turicatae (strain 91E135).